A 279-amino-acid polypeptide reads, in one-letter code: Protein phosphatase 1 regulatory subunit 3E (279 aa).

Phosphoserine is present on residues Ser-16 and Ser-33. Positions 28–86 (RSQRPSLEEEPEEEPGEGGTRFGARSRAHAPSRGRRARSAPAGGGGARAPRSRSPDTRK) are disordered. The segment covering 51–65 (ARSRAHAPSRGRRAR) has biased composition (basic residues). The residue at position 66 (Ser-66) is a Phosphoserine. A PP1-binding motif motif is present at residues 87–90 (RVRF). One can recognise a CBM21 domain in the interval 154 to 259 (AARLLTQRIC…NNGGRDYALR (106 aa)). The glycogen-binding motif stretch occupies residues 176–198 (GSARVVDLAYEKRVSVRWSADGW). A substrate-binding motif region spans residues 248 to 256 (WDNNGGRDY).

As to expression, expressed in skeletal muscle and heart with barely detectable levels in liver.

Its function is as follows. Acts as a glycogen-targeting subunit for PP1. PP1 is involved in glycogen metabolism and contributes to the activation of glycogen synthase leading to an increase in glycogen synthesis. This chain is Protein phosphatase 1 regulatory subunit 3E (PPP1R3E), found in Homo sapiens (Human).